Consider the following 450-residue polypeptide: MKATKTTYKKDPMGLTPSQIVNELNRFIVGQEKAKKAVAIALRNRCRRKRVEGNLRNEIVPKNILMIGSTGVGKTEIARRLAKLTNSPFYKIEATKFTEVGYVGRDVESIIRDLVEIAVNTEKTLAKTKVDIHAREKAIERILDSLVGKTSSSETREKFKEKILNGELDDKEIEISVADTTPVGGGSFEIPGMPGASMGVLNLGDMIGRALGSSKTKTKKMLVKDAMAIIIPEESEKLIDQEKIIQQAINLAENDGIVFIDEIDKIASTGSSGAKNAAISREGVQRDLLPLIEGTTVNTKYGPVKTDHILFIASGAFHIAKPSDLLPELQGRLPIRVELNSLTKDDMIKILLEPETSLIKQYSALIGTEDVRLEFAASAIEKIADYAITVNLEVEDIGARRLHTILENLLEDISFEASEMKGKKITIDDKFVENQLSKIITNLDLAKFVL.

ATP-binding positions include Val29, 71–76 (GVGKTE), Asp261, Glu328, and Arg400.

It belongs to the ClpX chaperone family. HslU subfamily. A double ring-shaped homohexamer of HslV is capped on each side by a ring-shaped HslU homohexamer. The assembly of the HslU/HslV complex is dependent on binding of ATP.

It is found in the cytoplasm. In terms of biological role, ATPase subunit of a proteasome-like degradation complex; this subunit has chaperone activity. The binding of ATP and its subsequent hydrolysis by HslU are essential for unfolding of protein substrates subsequently hydrolyzed by HslV. HslU recognizes the N-terminal part of its protein substrates and unfolds these before they are guided to HslV for hydrolysis. The protein is ATP-dependent protease ATPase subunit HslU of Rickettsia africae (strain ESF-5).